An 88-amino-acid chain; its full sequence is Large ribosomal subunit protein bL27 (88 aa).

Residues 1 to 21 (MAHKKGTGSTRNGRDSNAKRL) form a disordered region.

Belongs to the bacterial ribosomal protein bL27 family.

The chain is Large ribosomal subunit protein bL27 from Parasynechococcus marenigrum (strain WH8102).